We begin with the raw amino-acid sequence, 143 residues long: Deoxyuridine 5'-triphosphate nucleotidohydrolase (143 aa).

Substrate-binding positions include 62-64 (RSG), N75, and 79-81 (TID).

Belongs to the dUTPase family. The cofactor is Mg(2+).

The catalysed reaction is dUTP + H2O = dUMP + diphosphate + H(+). Its pathway is pyrimidine metabolism; dUMP biosynthesis; dUMP from dCTP (dUTP route): step 2/2. In terms of biological role, this enzyme is involved in nucleotide metabolism: it produces dUMP, the immediate precursor of thymidine nucleotides and it decreases the intracellular concentration of dUTP so that uracil cannot be incorporated into DNA. The polypeptide is Deoxyuridine 5'-triphosphate nucleotidohydrolase (Acaryochloris marina (strain MBIC 11017)).